We begin with the raw amino-acid sequence, 101 residues long: Glutenin, high molecular weight subunit PC256 (101 aa).

Residues 1-27 (EKLGQGQQPRQWLQPRQGQQGYYPTSP) show a composition bias toward polar residues. The interval 1-65 (EKLGQGQQPR…QGYDSPYHVS (65 aa)) is disordered. Residues 41-62 (QGYYPTSPQQSGQGQQGYDSPY) are compositionally biased toward low complexity.

This sequence belongs to the gliadin/glutenin family. As to quaternary structure, disulfide-bridge linked aggregates.

Its function is as follows. Glutenins are high-molecular weight seed storage proteins of wheat endosperm. Thought to be responsible for the visco-elastic property of wheat dough. This is Glutenin, high molecular weight subunit PC256 from Triticum aestivum (Wheat).